Here is a 50-residue protein sequence, read N- to C-terminus: Sperm protamine P1 (50 aa).

2 disulfide bridges follow: Cys7–Cys15 and Cys39–Cys47.

The protein belongs to the protamine P1 family. As to quaternary structure, cross-linked by interchain disulfide bonds around the DNA-helix. As to expression, testis.

It is found in the nucleus. The protein localises to the chromosome. In terms of biological role, protamines substitute for histones in the chromatin of sperm during the haploid phase of spermatogenesis. They compact sperm DNA into a highly condensed, stable and inactive complex. In Sus scrofa (Pig), this protein is Sperm protamine P1 (PRM1).